The chain runs to 430 residues: Small ribosomal subunit protein uS9m (430 aa).

Residues 1-34 (MLSRLFLRHSNLRFVTLVSSKSNSQIFSSFIRPL) constitute a mitochondrion transit peptide. A disordered region spans residues 32-97 (RPLSTNSSGG…GGEGKWPEEP (66 aa)). A compositionally biased stretch (gly residues) spans 39 to 48 (SGGGGNGDGN). The segment covering 68-79 (GPFSSDDSFGSS) has biased composition (low complexity). Gly residues predominate over residues 80 to 91 (GVAGSGLPGGEG).

This sequence belongs to the universal ribosomal protein uS9 family. Interacts (via C terminus) with PIA2. Component of the mitochondrial ribosome small subunit. Expressed in root tips, young leaves, flowers and siliques.

It localises to the mitochondrion. Functionally, mitochondrial ribosomal protein required for central cell maturation. May work together with PIA2 in controlling female gametophyte development, possibly by regulating the expression of some mitochondrial proteins. The polypeptide is Small ribosomal subunit protein uS9m (Arabidopsis thaliana (Mouse-ear cress)).